We begin with the raw amino-acid sequence, 62 residues long: Photosystem II reaction center protein Z (62 aa).

Transmembrane regions (helical) follow at residues 8 to 28 (LVLL…VVLA) and 41 to 61 (YTGA…NSLV).

Belongs to the PsbZ family. PSII is composed of 1 copy each of membrane proteins PsbA, PsbB, PsbC, PsbD, PsbE, PsbF, PsbH, PsbI, PsbJ, PsbK, PsbL, PsbM, PsbT, PsbX, PsbY, PsbZ, Psb30/Ycf12, at least 3 peripheral proteins of the oxygen-evolving complex and a large number of cofactors. It forms dimeric complexes.

Its subcellular location is the plastid. The protein localises to the chloroplast thylakoid membrane. Its function is as follows. May control the interaction of photosystem II (PSII) cores with the light-harvesting antenna, regulates electron flow through the 2 photosystem reaction centers. PSII is a light-driven water plastoquinone oxidoreductase, using light energy to abstract electrons from H(2)O, generating a proton gradient subsequently used for ATP formation. This is Photosystem II reaction center protein Z from Porphyra purpurea (Red seaweed).